The primary structure comprises 277 residues: Phosphatidylglycerol--prolipoprotein diacylglyceryl transferase (277 aa).

3 consecutive transmembrane segments (helical) span residues 17–37, 63–83, and 101–121; these read LAIH…MLLG, ILFL…CLFY, and GGMA…WFAH. Residue arginine 146 participates in a 1,2-diacyl-sn-glycero-3-phospho-(1'-sn-glycerol) binding. A run of 3 helical transmembrane segments spans residues 182 to 202, 209 to 229, and 234 to 254; these read SQVY…WLYA, GQVA…AEQF, and AFLG…LPMI.

The protein belongs to the Lgt family.

It localises to the cell inner membrane. It catalyses the reaction L-cysteinyl-[prolipoprotein] + a 1,2-diacyl-sn-glycero-3-phospho-(1'-sn-glycerol) = an S-1,2-diacyl-sn-glyceryl-L-cysteinyl-[prolipoprotein] + sn-glycerol 1-phosphate + H(+). It functions in the pathway protein modification; lipoprotein biosynthesis (diacylglyceryl transfer). Functionally, catalyzes the transfer of the diacylglyceryl group from phosphatidylglycerol to the sulfhydryl group of the N-terminal cysteine of a prolipoprotein, the first step in the formation of mature lipoproteins. This Verminephrobacter eiseniae (strain EF01-2) protein is Phosphatidylglycerol--prolipoprotein diacylglyceryl transferase.